The chain runs to 227 residues: Phosphoglycolate phosphatase (227 aa).

Catalysis depends on D8, which acts as the Nucleophile. Mg(2+) contacts are provided by D8 and D10. K152 provides a ligand contact to substrate. Mg(2+) contacts are provided by D175 and D179.

It belongs to the archaeal SPP-like hydrolase family. It depends on Mg(2+) as a cofactor.

It carries out the reaction 2-phosphoglycolate + H2O = glycolate + phosphate. Catalyzes the dephosphorylation of 2-phosphoglycolate. This is Phosphoglycolate phosphatase from Halorubrum lacusprofundi (strain ATCC 49239 / DSM 5036 / JCM 8891 / ACAM 34).